The primary structure comprises 86 residues: RNA-binding protein Hfq (86 aa).

The 60-residue stretch at 9-68 folds into the Sm domain; it reads DPYLNTLRKERVPVSIYLVNGIKLQGQIESFDQFVILLKNTVSQMVYKHAISTVVPSRPV. The disordered stretch occupies residues 66–86; the sequence is RPVRLPSAGDSEQADAEPGNA.

The protein belongs to the Hfq family. Homohexamer.

In terms of biological role, RNA chaperone that binds small regulatory RNA (sRNAs) and mRNAs to facilitate mRNA translational regulation in response to envelope stress, environmental stress and changes in metabolite concentrations. Also binds with high specificity to tRNAs. This Ectopseudomonas mendocina (strain ymp) (Pseudomonas mendocina) protein is RNA-binding protein Hfq.